Consider the following 81-residue polypeptide: ATP synthase subunit c, chloroplastic (81 aa).

The next 2 membrane-spanning stretches (helical) occupy residues 3-23 (PLVFAASVIAAGLAVGLASIG) and 57-77 (LAFMEALTIYGLVVALALLFA).

Belongs to the ATPase C chain family. As to quaternary structure, F-type ATPases have 2 components, F(1) - the catalytic core - and F(0) - the membrane proton channel. F(1) has five subunits: alpha(3), beta(3), gamma(1), delta(1), epsilon(1). F(0) has four main subunits: a(1), b(1), b'(1) and c(10-14). The alpha and beta chains form an alternating ring which encloses part of the gamma chain. F(1) is attached to F(0) by a central stalk formed by the gamma and epsilon chains, while a peripheral stalk is formed by the delta, b and b' chains.

It localises to the plastid. The protein localises to the chloroplast thylakoid membrane. Functionally, f(1)F(0) ATP synthase produces ATP from ADP in the presence of a proton or sodium gradient. F-type ATPases consist of two structural domains, F(1) containing the extramembraneous catalytic core and F(0) containing the membrane proton channel, linked together by a central stalk and a peripheral stalk. During catalysis, ATP synthesis in the catalytic domain of F(1) is coupled via a rotary mechanism of the central stalk subunits to proton translocation. Its function is as follows. Key component of the F(0) channel; it plays a direct role in translocation across the membrane. A homomeric c-ring of between 10-14 subunits forms the central stalk rotor element with the F(1) delta and epsilon subunits. The chain is ATP synthase subunit c, chloroplastic from Atropa belladonna (Belladonna).